The sequence spans 380 residues: Cytochrome b (380 aa).

The next 4 membrane-spanning stretches (helical) occupy residues 34–54 (FGSL…LLAT), 78–99 (WLIR…YLHI), 114–134 (WNTG…GYVL), and 179–199 (FFAL…IHLT). Heme b contacts are provided by His-84 and His-98. The heme b site is built by His-183 and His-197. His-202 serves as a coordination point for a ubiquinone. 4 helical membrane passes run 227–247 (LKDI…ALFS), 289–309 (LGGV…PFLH), 321–341 (ISQL…WVGS), and 348–368 (FIII…ILFP).

The protein belongs to the cytochrome b family. The cytochrome bc1 complex contains 11 subunits: 3 respiratory subunits (MT-CYB, CYC1 and UQCRFS1), 2 core proteins (UQCRC1 and UQCRC2) and 6 low-molecular weight proteins (UQCRH/QCR6, UQCRB/QCR7, UQCRQ/QCR8, UQCR10/QCR9, UQCR11/QCR10 and a cleavage product of UQCRFS1). This cytochrome bc1 complex then forms a dimer. Heme b serves as cofactor.

It localises to the mitochondrion inner membrane. Its function is as follows. Component of the ubiquinol-cytochrome c reductase complex (complex III or cytochrome b-c1 complex) that is part of the mitochondrial respiratory chain. The b-c1 complex mediates electron transfer from ubiquinol to cytochrome c. Contributes to the generation of a proton gradient across the mitochondrial membrane that is then used for ATP synthesis. The polypeptide is Cytochrome b (MT-CYB) (Pelecanoides magellani (Magellanic diving petrel)).